A 1214-amino-acid polypeptide reads, in one-letter code: Myosin-1 (1214 aa).

Positions 1 to 21 (MAIIKRGARNKTAQEPAKRSA) are disordered. The region spanning 36-715 (VGVSDLTLLS…TLFALEHMRD (680 aa)) is the Myosin motor domain. 129 to 136 (GESGAGKT) lines the ATP pocket. Phosphoserine is present on Ser357. The segment at 404–486 (SIGILDIYGF…PGIFAAMNDS (83 aa)) is actin-binding. IQ domains are found at residues 719-739 (YNMAARIQRAWRRFLQRRIDS) and 740-765 (ATRIQRAIREKKGGNKYEKLRDEGSK). Residues 771–961 (KERRTMSLLG…TILVRRGHPA (191 aa)) form the TH1 domain. Disordered stretches follow at residues 926–1090 (KPGK…SELP), 1129–1177 (HQGG…AAAQ), and 1193–1214 (NKMRVESDGEDNGNDDDDDDDW). Residues 965–980 (QKKKPKKGKGHSKHHS) show a composition bias toward basic residues. Low complexity-rich tracts occupy residues 981–1000 (TSTSAPRSSVQSSQPSAPVS) and 1037–1057 (AAQPQATPQPAQVTQPQQKKV). Pro residues predominate over residues 1058–1067 (APPPPPPPPM). One can recognise an SH3 domain in the interval 1069 to 1131 (SSEPKYEAAY…PTNYVVKHQG (63 aa)). Residues 1157–1177 (VSSSQSETATTATPASVAAAQ) are compositionally biased toward low complexity. Positions 1200–1214 (DGEDNGNDDDDDDDW) are enriched in acidic residues.

It belongs to the TRAFAC class myosin-kinesin ATPase superfamily. Myosin family. Post-translationally, phosphorylation of the TEDS site (Ser-357) is required for the polarization of the actin cytoskeleton. Phosphorylation probably activates the myosin-I ATPase activity.

It is found in the cytoplasm. The protein localises to the cytoskeleton. Its subcellular location is the actin patch. In terms of biological role, type-I myosin implicated in the organization of the actin cytoskeleton. Required for proper actin cytoskeleton polarization. At the cell cortex, assembles in patch-like structures together with proteins from the actin-polymerizing machinery and promotes actin assembly. Functions as actin nucleation-promoting factor (NPF) for the Arp2/3 complex. This chain is Myosin-1 (MYO1), found in Vanderwaltozyma polyspora (strain ATCC 22028 / DSM 70294 / BCRC 21397 / CBS 2163 / NBRC 10782 / NRRL Y-8283 / UCD 57-17) (Kluyveromyces polysporus).